The following is a 370-amino-acid chain: Aminomethyltransferase (370 aa).

It belongs to the GcvT family. The glycine cleavage system is composed of four proteins: P, T, L and H.

The enzyme catalyses N(6)-[(R)-S(8)-aminomethyldihydrolipoyl]-L-lysyl-[protein] + (6S)-5,6,7,8-tetrahydrofolate = N(6)-[(R)-dihydrolipoyl]-L-lysyl-[protein] + (6R)-5,10-methylene-5,6,7,8-tetrahydrofolate + NH4(+). In terms of biological role, the glycine cleavage system catalyzes the degradation of glycine. This is Aminomethyltransferase from Clostridium botulinum (strain Langeland / NCTC 10281 / Type F).